A 458-amino-acid polypeptide reads, in one-letter code: ATP synthase subunit beta (458 aa).

Glycine 148–threonine 155 serves as a coordination point for ATP.

This sequence belongs to the ATPase alpha/beta chains family. F-type ATPases have 2 components, CF(1) - the catalytic core - and CF(0) - the membrane proton channel. CF(1) has five subunits: alpha(3), beta(3), gamma(1), delta(1), epsilon(1). CF(0) has three main subunits: a(1), b(2) and c(9-12). The alpha and beta chains form an alternating ring which encloses part of the gamma chain. CF(1) is attached to CF(0) by a central stalk formed by the gamma and epsilon chains, while a peripheral stalk is formed by the delta and b chains.

Its subcellular location is the cell inner membrane. It catalyses the reaction ATP + H2O + 4 H(+)(in) = ADP + phosphate + 5 H(+)(out). Its function is as follows. Produces ATP from ADP in the presence of a proton gradient across the membrane. The catalytic sites are hosted primarily by the beta subunits. The polypeptide is ATP synthase subunit beta (Francisella tularensis subsp. tularensis (strain FSC 198)).